Consider the following 95-residue polypeptide: MSLKQSMENKDIALIDILDVILDKGVAIKGDLIISIAGVDLVYLDLRVLISSVETLVQAKEGNHKPITSEQFDKQKEELMDATGQPSKWTNPLGS.

This sequence belongs to the gas vesicle GvpA family.

It is found in the gas vesicle. Its function is as follows. Probably a minor component of the gas vesicle. It is not clear what function gas vesicles perform in soil bacteria. Functionally, when a minimal gvp locus (gvpA2-gvpR-gvpN-gvpF-gvpG-gvpL-gvpS-gvpK-gvpJ-gvpT-gvpU, called pNL29) is expressed in E.coli gas vesicles are made. The sequence is that of Gas vesicle protein S from Priestia megaterium (Bacillus megaterium).